The sequence spans 247 residues: ATP synthase subunit a, chloroplastic (247 aa).

5 helical membrane-spanning segments follow: residues 38 to 58 (QVLITSWVVIAILLGSATVAV), 95 to 115 (VPFIGTMFLFIFVSNWSGALL), 134 to 154 (INTTVALALPTSVAYFYAGLT), 199 to 219 (LVVVVLVSLVPSVVPIPVMFL), and 220 to 240 (GLFTSGIQALIFATLAAAYIG).

It belongs to the ATPase A chain family. F-type ATPases have 2 components, CF(1) - the catalytic core - and CF(0) - the membrane proton channel. CF(1) has five subunits: alpha(3), beta(3), gamma(1), delta(1), epsilon(1). CF(0) has four main subunits: a, b, b' and c.

It is found in the plastid. Its subcellular location is the chloroplast thylakoid membrane. Functionally, key component of the proton channel; it plays a direct role in the translocation of protons across the membrane. The protein is ATP synthase subunit a, chloroplastic of Platanus occidentalis (Sycamore).